Consider the following 127-residue polypeptide: UPF0102 protein Mmar10_3014 (127 aa).

The protein belongs to the UPF0102 family.

The polypeptide is UPF0102 protein Mmar10_3014 (Maricaulis maris (strain MCS10) (Caulobacter maris)).